Here is a 260-residue protein sequence, read N- to C-terminus: Transcriptional activator protein AsaR (260 aa).

The HTH luxR-type domain maps to 176 to 241 (EDDPQEALTD…QAIAKGVSSG (66 aa)). Positions 200 to 219 (SGEIACILGITERTVNYHLN) form a DNA-binding region, H-T-H motif.

Belongs to the autoinducer-regulated transcriptional regulatory protein family.

Functionally, functions as a BHL-responsive transcriptional regulator. The sequence is that of Transcriptional activator protein AsaR from Aeromonas salmonicida.